The chain runs to 172 residues: MAKFQPKVQDEGRDDGLREKMIAVNRVTKVVKGGRILGFAALTVVGDGDGRVGMGKGKSKEVPAAVQKAMEEARRNMVKVSLKNGTIHHNVTGHHGAAVVMMAPAPKGAGIIAGGPMRAVFEVLGVTDIVAKSHGSSNPYNMVRATFDALVHSTTASQVAAKRGKTVEDIFA.

Residues 17–80 form the S5 DRBM domain; that stretch reads LREKMIAVNR…EEARRNMVKV (64 aa).

The protein belongs to the universal ribosomal protein uS5 family. Part of the 30S ribosomal subunit. Contacts proteins S4 and S8.

With S4 and S12 plays an important role in translational accuracy. In terms of biological role, located at the back of the 30S subunit body where it stabilizes the conformation of the head with respect to the body. This chain is Small ribosomal subunit protein uS5, found in Verminephrobacter eiseniae (strain EF01-2).